Here is a 432-residue protein sequence, read N- to C-terminus: Polyadenylate-binding protein RBP47C (432 aa).

Residues 1 to 55 form a disordered region; the sequence is MADVKIQSESESSDSHPVVDNQPPPPPPPPQQPAKEEENQPKTSPTPPPHWMRYP. Residues 22 to 32 are compositionally biased toward pro residues; it reads QPPPPPPPPQQ. RRM domains follow at residues 101–183 and 197–276; these read KTIW…WASF and LSIF…PATP. The interval 271-293 is disordered; it reads IGPATPRKTNGYQQQGGYMPNGT. Over residues 277–286 the composition is skewed to polar residues; it reads RKTNGYQQQG. Residues 304 to 376 enclose the RRM 3 domain; that stretch reads TTIFVGGLDS…QTVRLSWGRN (73 aa).

This sequence belongs to the polyadenylate-binding RBP47 family. As to quaternary structure, interacts with the poly(A) tail of mRNA in nucleus. As to expression, expressed in leaves, stems, flowers, and seedlings.

The protein resides in the nucleus. It is found in the cytoplasmic granule. In terms of biological role, heterogeneous nuclear ribonucleoprotein (hnRNP)-protein binding the poly(A) tail of mRNA and probably involved in some steps of pre-mRNA maturation. This Arabidopsis thaliana (Mouse-ear cress) protein is Polyadenylate-binding protein RBP47C (RBP47C).